Consider the following 434-residue polypeptide: Isocitrate lyase (434 aa).

Position 91–93 (91–93) interacts with substrate; sequence SGW. Aspartate 157 lines the Mg(2+) pocket. The active-site Proton acceptor is cysteine 195. Substrate is bound by residues 196 to 197, arginine 232, 317 to 321, and threonine 351; these read GH and NCSPS.

Belongs to the isocitrate lyase/PEP mutase superfamily. Isocitrate lyase family. In terms of assembly, homotetramer. Mg(2+) is required as a cofactor.

The enzyme catalyses D-threo-isocitrate = glyoxylate + succinate. It participates in carbohydrate metabolism; glyoxylate cycle; (S)-malate from isocitrate: step 1/2. Its function is as follows. Involved in the metabolic adaptation in response to environmental changes. Catalyzes the reversible formation of succinate and glyoxylate from isocitrate, a key step of the glyoxylate cycle, which operates as an anaplerotic route for replenishing the tricarboxylic acid cycle during growth on fatty acid substrates. This Salmonella typhimurium (strain LT2 / SGSC1412 / ATCC 700720) protein is Isocitrate lyase (aceA).